A 294-amino-acid polypeptide reads, in one-letter code: MNNIFKGLITAAITPFKDNKLDLYALERILKHQIKYEVDAILIAGSTGEGSSLSFEEYKLLLQTSVEIVNNRIPIISGCSSNNTAYARELAAESTKIKVDGFMASPPSYVKPTQYGIYKHFEALHEACNLPIMLYSAPTRSGVDFSDETILRLSKLPRILALKDCGVDLERPLRIRAVVKKDFNILTGNDEVVLAFNAQGGVGWTSVASNIAPDMCKELLEKWNKNDTKGALEIHQKLLPLYKALFVESNPIPIKYAAYYLGLCENEIRLPLTEASDSAKKQIENIITSLSIKL.

Position 47 (T47) interacts with pyruvate. Catalysis depends on Y135, which acts as the Proton donor/acceptor. K163 acts as the Schiff-base intermediate with substrate in catalysis. T205 contributes to the pyruvate binding site.

The protein belongs to the DapA family. Homotetramer; dimer of dimers.

The protein resides in the cytoplasm. The enzyme catalyses L-aspartate 4-semialdehyde + pyruvate = (2S,4S)-4-hydroxy-2,3,4,5-tetrahydrodipicolinate + H2O + H(+). Its pathway is amino-acid biosynthesis; L-lysine biosynthesis via DAP pathway; (S)-tetrahydrodipicolinate from L-aspartate: step 3/4. Functionally, catalyzes the condensation of (S)-aspartate-beta-semialdehyde [(S)-ASA] and pyruvate to 4-hydroxy-tetrahydrodipicolinate (HTPA). This Rickettsia felis (strain ATCC VR-1525 / URRWXCal2) (Rickettsia azadi) protein is 4-hydroxy-tetrahydrodipicolinate synthase.